The primary structure comprises 56 residues: Single-pass membrane and coiled-coil domain-containing protein 4 homolog (56 aa).

Residues 1–27 (MRQLPGKAAKETRKMKRERKQQNKEGH) form a disordered region. A coiled-coil region spans residues 9-31 (AKETRKMKRERKQQNKEGHNRVV). The chain crosses the membrane as a helical span at residues 30–50 (VVTVAIPVCLAVFVMLIVYVY).

This sequence belongs to the SMCO4 family.

The protein resides in the membrane. The polypeptide is Single-pass membrane and coiled-coil domain-containing protein 4 homolog (Nematostella vectensis (Starlet sea anemone)).